Consider the following 232-residue polypeptide: 2-C-methyl-D-erythritol 4-phosphate cytidylyltransferase (232 aa).

Belongs to the IspD/TarI cytidylyltransferase family. IspD subfamily.

The catalysed reaction is 2-C-methyl-D-erythritol 4-phosphate + CTP + H(+) = 4-CDP-2-C-methyl-D-erythritol + diphosphate. It functions in the pathway isoprenoid biosynthesis; isopentenyl diphosphate biosynthesis via DXP pathway; isopentenyl diphosphate from 1-deoxy-D-xylulose 5-phosphate: step 2/6. In terms of biological role, catalyzes the formation of 4-diphosphocytidyl-2-C-methyl-D-erythritol from CTP and 2-C-methyl-D-erythritol 4-phosphate (MEP). The chain is 2-C-methyl-D-erythritol 4-phosphate cytidylyltransferase from Stenotrophomonas maltophilia (strain K279a).